The chain runs to 45 residues: MTKRTLGGTSRKRKRVSGFRVRMRSHTGRRVIRTRRKRGRTRLAV.

Residues 1–27 (MTKRTLGGTSRKRKRVSGFRVRMRSHT) form a disordered region. Over residues 10–27 (SRKRKRVSGFRVRMRSHT) the composition is skewed to basic residues.

Belongs to the bacterial ribosomal protein bL34 family.

The sequence is that of Large ribosomal subunit protein bL34 from Synechococcus sp. (strain CC9902).